Reading from the N-terminus, the 1567-residue chain is ABC multidrug transporter MDR1 (1567 aa).

Pro residues predominate over residues 1–11; it reads MASQPPQPPSG. Residues 1 to 37 form a disordered region; the sequence is MASQPPQPPSGQPDTQYEEYQSEVITETTNRPTPAAD. The segment covering 22 to 32 has biased composition (polar residues); the sequence is SEVITETTNRP. N-linked (GlcNAc...) asparagine glycans are attached at residues N149, N157, and N356. The region spanning 167-432 is the ABC transporter 1 domain; sequence VQYQDTFLSP…FEEMGWYCPP (266 aa). Helical transmembrane passes span 543 to 563, 571 to 591, 636 to 656, 661 to 681, 691 to 711, and 798 to 818; these read STIA…SLFF, GFFA…LMSI, IPIK…LGGL, AKFF…SAIF, IPQA…YTGF, and LGIL…VSEL. N819, N895, and N912 each carry an N-linked (GlcNAc...) asparagine glycan. An ABC transporter 2 domain is found at 891 to 1134; that stretch reads FTWRNVTYDI…LLNYFETHGA (244 aa). 927 to 934 contributes to the ATP binding site; that stretch reads GVSGAGKT. A disordered region spans residues 1172–1202; sequence ESRHVQQELDRIQSETSKRNEGHGQSAEKEP. A helical transmembrane segment spans residues 1231-1251; sequence IWGKLLLGLTSALFIGFSFFL. Residue N1253 is glycosylated (N-linked (GlcNAc...) asparagine). 5 helical membrane passes run 1257–1277, 1305–1325, 1345–1365, 1372–1392, and 1498–1518; these read AGLQ…SSLV, VFLL…GIIA, ILLL…QMII, ETAG…NGVL, and GIGW…YYLI.

It belongs to the ABC transporter superfamily. ABCG family. PDR (TC 3.A.1.205) subfamily.

The protein localises to the cell membrane. It carries out the reaction voriconazole(in) + ATP + H2O = voriconazole(out) + ADP + phosphate + H(+). The catalysed reaction is fluconazole(in) + ATP + H2O = fluconazole(out) + ADP + phosphate + H(+). It catalyses the reaction (R)-miconazole(in) + ATP + H2O = (R)-miconazole(out) + ADP + phosphate + H(+). The enzyme catalyses (S)-miconazole(in) + ATP + H2O = (S)-miconazole(out) + ADP + phosphate + H(+). Functionally, pleiotropic ABC efflux transporter that may be involved in the modulation susceptibility to a wide range of unrelated cytotoxic compounds. The protein is ABC multidrug transporter MDR1 of Trichophyton tonsurans (strain CBS 112818) (Scalp ringworm fungus).